Here is a 311-residue protein sequence, read N- to C-terminus: Tricarboxylate transport protein, mitochondrial (311 aa).

The propeptide at 1–13 is removed in mature form; the sequence is MAAPRGPRALSAA. A disordered region spans residues 1–21; the sequence is MAAPRGPRALSAAAPGSGKPK. Solcar repeat units follow at residues 23-111, 122-208, and 218-303; these read THPG…LSNH, RRGL…LRNW, and MNPL…VVKL. The next 3 membrane-spanning stretches (helical) occupy residues 29-46, 86-105, and 129-143; these read ILAG…TFPT, GLSS…FGMF, and LGAG…VCPM. A Phosphoserine modification is found at Ser-156. 3 consecutive transmembrane segments (helical) span residues 183-202, 224-241, and 278-297; these read GLTA…FFVM, GVFG…NTPL, and GTVP…FIIY.

The protein belongs to the mitochondrial carrier (TC 2.A.29) family. Post-translationally, possesses a short cleavable presequence, which, however, is found to be dispensable both for targeting to mitochondria and insertion into the inner membrane. However, the presequence is required to keep SLC25A1 in a soluble state and thus in an import-competent state. Mature SLC25A1 lacking the presequence is prone to aggregation. As to expression, expressed minimally but ubiquitously throughout the adult brain. Detected at higher levels in the olfactory bulb, neocortex and cerebellum. Also expressed in a subset of large cells in the globus pallidus.

The protein localises to the mitochondrion inner membrane. The protein resides in the mitochondrion membrane. It catalyses the reaction (S)-malate(in) + citrate(out) = (S)-malate(out) + citrate(in). The catalysed reaction is D-threo-isocitrate(in) + citrate(out) = D-threo-isocitrate(out) + citrate(in). The enzyme catalyses citrate(out) + succinate(in) = citrate(in) + succinate(out). It carries out the reaction cis-aconitate(in) + citrate(out) = cis-aconitate(out) + citrate(in). It catalyses the reaction trans-aconitate(in) + citrate(out) = trans-aconitate(out) + citrate(in). The catalysed reaction is phosphoenolpyruvate(in) + citrate(out) = phosphoenolpyruvate(out) + citrate(in). The enzyme catalyses maleate(in) + citrate(out) = maleate(out) + citrate(in). Mitochondrial electroneutral antiporter that exports citrate from the mitochondria into the cytosol in exchange for malate. Also able to mediate the exchange of citrate for isocitrate, phosphoenolpyruvate, cis-aconitate and to a lesser extent trans-aconitate, maleate and succinate. In the cytoplasm, citrate plays important roles in fatty acid and sterol synthesis, regulation of glycolysis, protein acetylation, and other physiopathological processes. In Mus musculus (Mouse), this protein is Tricarboxylate transport protein, mitochondrial.